Reading from the N-terminus, the 603-residue chain is Membrane protein insertase YidC (603 aa).

Residues 7–27 (FFITIALSVLILAVWQYFYVL) form a helical membrane-spanning segment. Residues 38–51 (RVEQQRVEEQKKAA) are compositionally biased toward basic and acidic residues. The disordered stretch occupies residues 38 to 76 (RVEQQRVEEQKKAAEAANPGAGTPAPAPGTIPNAPGGDT). Residues 52 to 74 (EAANPGAGTPAPAPGTIPNAPGG) show a composition bias toward low complexity. Helical transmembrane passes span 352-372 (FDLLIDWGWFHFITKPMFWLI), 378-398 (FLGNFGLAILATTVIVKALFF), 452-472 (WPVALQIPVFFSLYKVLYITI), 497-517 (LFGLIPVTLPHMLMIGVWPLI), and 540-560 (IFTWMPVIFTFMMAGFPAGLV).

This sequence belongs to the OXA1/ALB3/YidC family. Type 1 subfamily. Interacts with the Sec translocase complex via SecD. Specifically interacts with transmembrane segments of nascent integral membrane proteins during membrane integration.

It localises to the cell inner membrane. Required for the insertion and/or proper folding and/or complex formation of integral membrane proteins into the membrane. Involved in integration of membrane proteins that insert both dependently and independently of the Sec translocase complex, as well as at least some lipoproteins. Aids folding of multispanning membrane proteins. The chain is Membrane protein insertase YidC from Mesorhizobium japonicum (strain LMG 29417 / CECT 9101 / MAFF 303099) (Mesorhizobium loti (strain MAFF 303099)).